Reading from the N-terminus, the 138-residue chain is ATP synthase epsilon chain, chloroplastic (138 aa).

It belongs to the ATPase epsilon chain family. As to quaternary structure, F-type ATPases have 2 components, CF(1) - the catalytic core - and CF(0) - the membrane proton channel. CF(1) has five subunits: alpha(3), beta(3), gamma(1), delta(1), epsilon(1). CF(0) has three main subunits: a, b and c.

The protein resides in the plastid. It is found in the chloroplast thylakoid membrane. Its function is as follows. Produces ATP from ADP in the presence of a proton gradient across the membrane. This chain is ATP synthase epsilon chain, chloroplastic, found in Staurastrum punctulatum (Green alga).